Reading from the N-terminus, the 149-residue chain is Transcriptional repressor NrdR (149 aa).

A zinc finger lies at 3–34 (CPFCAAVDTKVIDSRLVSDGSQVRRRRQCLDC). Residues 49-139 (PRVIKSDEVR…VYRSFEDVRE (91 aa)) enclose the ATP-cone domain.

It belongs to the NrdR family. The cofactor is Zn(2+).

Functionally, negatively regulates transcription of bacterial ribonucleotide reductase nrd genes and operons by binding to NrdR-boxes. The protein is Transcriptional repressor NrdR of Yersinia pseudotuberculosis serotype O:1b (strain IP 31758).